Consider the following 416-residue polypeptide: Adipocyte plasma membrane-associated protein (416 aa).

At 1 to 39 (MNEPEGLRFRRLNRPQIITDELQEPQYKGTSTYSGKVFR) the chain is on the cytoplasmic side. Residues 40 to 60 (VILVTLGGCLILPLLVVFFLL) form a helical membrane-spanning segment. Residues 61 to 412 (ESPIHPELLS…FRSPYLCKLD (352 aa)) are Extracellular-facing. The N-linked (GlcNAc...) asparagine glycan is linked to asparagine 160.

This sequence belongs to the strictosidine synthase family.

It localises to the membrane. This Salmo salar (Atlantic salmon) protein is Adipocyte plasma membrane-associated protein (apmap).